The following is a 250-amino-acid chain: UDP-2,3-diacylglucosamine hydrolase (250 aa).

Residues Asp-8, His-10, Asp-41, Asn-79, and His-114 each contribute to the Mn(2+) site. 79–80 lines the substrate pocket; the sequence is NR. The substrate site is built by Asp-122, Ser-160, Asp-172, Gln-175, and His-203. Mn(2+) is bound by residues His-203 and His-205.

It belongs to the LpxH family. Mn(2+) is required as a cofactor.

Its subcellular location is the cell inner membrane. The catalysed reaction is UDP-2-N,3-O-bis[(3R)-3-hydroxytetradecanoyl]-alpha-D-glucosamine + H2O = 2-N,3-O-bis[(3R)-3-hydroxytetradecanoyl]-alpha-D-glucosaminyl 1-phosphate + UMP + 2 H(+). The protein operates within glycolipid biosynthesis; lipid IV(A) biosynthesis; lipid IV(A) from (3R)-3-hydroxytetradecanoyl-[acyl-carrier-protein] and UDP-N-acetyl-alpha-D-glucosamine: step 4/6. In terms of biological role, hydrolyzes the pyrophosphate bond of UDP-2,3-diacylglucosamine to yield 2,3-diacylglucosamine 1-phosphate (lipid X) and UMP by catalyzing the attack of water at the alpha-P atom. Involved in the biosynthesis of lipid A, a phosphorylated glycolipid that anchors the lipopolysaccharide to the outer membrane of the cell. This chain is UDP-2,3-diacylglucosamine hydrolase, found in Xylella fastidiosa (strain M12).